A 373-amino-acid polypeptide reads, in one-letter code: Mating-type protein A-2 (373 aa).

The disordered stretch occupies residues 1–22 (MNLLNMQPKRSEQPAMFEENRA).

To P.anserina SMR1.

Functionally, required, together with mating-type protein A-3, for efficient ascospore formation. The sequence is that of Mating-type protein A-2 (matA-2) from Neurospora crassa (strain ATCC 24698 / 74-OR23-1A / CBS 708.71 / DSM 1257 / FGSC 987).